We begin with the raw amino-acid sequence, 486 residues long: Protein DETOXIFICATION 27 (486 aa).

The disordered stretch occupies residues 1 to 25 (MRGGDGEEGSESRVALLKSPHTAEE). 12 helical membrane-spanning segments follow: residues 41 to 61 (LWQI…MLVI), 74 to 94 (LAAI…LLLG), 124 to 144 (IVLF…TPVL), 153 to 173 (IAEL…AFTL), 189 to 209 (VTAY…WLFV), 216 to 236 (VVGT…ILLV), 269 to 289 (GVML…TGNL), 299 to 319 (LSIC…FFAG), 349 to 369 (IIGL…AWIF), 384 to 404 (LLLA…GVAV), 407 to 427 (GWQS…GVPL), and 439 to 461 (VMGI…LSFI).

This sequence belongs to the multi antimicrobial extrusion (MATE) (TC 2.A.66.1) family.

The protein localises to the membrane. The sequence is that of Protein DETOXIFICATION 27 from Arabidopsis thaliana (Mouse-ear cress).